The chain runs to 293 residues: Ribonuclease HIII (293 aa).

The RNase H type-2 domain occupies 78–293; sequence LPLIGTDEVG…TEKAKKRLER (216 aa). A divalent metal cation is bound by residues aspartate 84, glutamate 85, and aspartate 187.

The protein belongs to the RNase HII family. RnhC subfamily. Mn(2+) is required as a cofactor. Mg(2+) serves as cofactor.

It localises to the cytoplasm. It carries out the reaction Endonucleolytic cleavage to 5'-phosphomonoester.. Its function is as follows. Endonuclease that specifically degrades the RNA of RNA-DNA hybrids. This chain is Ribonuclease HIII, found in Streptococcus pneumoniae (strain JJA).